We begin with the raw amino-acid sequence, 198 residues long: Holliday junction branch migration complex subunit RuvA (198 aa).

Residues 1–63 (MYDYIKGQLT…EDAHLLFGFH (63 aa)) are domain I. A domain II region spans residues 64 to 142 (TEDEKDVFLK…EAPQETGHTK (79 aa)). Residues 143–147 (ARSNK) are flexible linker. The domain III stretch occupies residues 148–198 (AGNTQLDEAIEALLALGYKATELKKIRAFFEGTSETAEQYIKSALKLLMKG).

It belongs to the RuvA family. As to quaternary structure, homotetramer. Forms an RuvA(8)-RuvB(12)-Holliday junction (HJ) complex. HJ DNA is sandwiched between 2 RuvA tetramers; dsDNA enters through RuvA and exits via RuvB. An RuvB hexamer assembles on each DNA strand where it exits the tetramer. Each RuvB hexamer is contacted by two RuvA subunits (via domain III) on 2 adjacent RuvB subunits; this complex drives branch migration. In the full resolvosome a probable DNA-RuvA(4)-RuvB(12)-RuvC(2) complex forms which resolves the HJ.

It localises to the cytoplasm. The RuvA-RuvB-RuvC complex processes Holliday junction (HJ) DNA during genetic recombination and DNA repair, while the RuvA-RuvB complex plays an important role in the rescue of blocked DNA replication forks via replication fork reversal (RFR). RuvA specifically binds to HJ cruciform DNA, conferring on it an open structure. The RuvB hexamer acts as an ATP-dependent pump, pulling dsDNA into and through the RuvAB complex. HJ branch migration allows RuvC to scan DNA until it finds its consensus sequence, where it cleaves and resolves the cruciform DNA. This chain is Holliday junction branch migration complex subunit RuvA, found in Streptococcus pyogenes serotype M6 (strain ATCC BAA-946 / MGAS10394).